A 50-amino-acid polypeptide reads, in one-letter code: Insulin (50 aa).

3 disulfides stabilise this stretch: cysteine 7–cysteine 36, cysteine 19–cysteine 49, and cysteine 35–cysteine 40.

The protein belongs to the insulin family. In terms of assembly, heterodimer of a B chain and an A chain linked by two disulfide bonds.

It is found in the secreted. In terms of biological role, insulin decreases blood glucose concentration. It increases cell permeability to monosaccharides, amino acids and fatty acids. It accelerates glycolysis, the pentose phosphate cycle, and glycogen synthesis in liver. This chain is Insulin (INS), found in Proechimys guairae (Guaira spiny rat).